Reading from the N-terminus, the 79-residue chain is Probable [Fe-S]-dependent transcriptional repressor (79 aa).

Residues Cys56, Cys61, Cys64, and Cys71 each coordinate iron-sulfur cluster.

The protein belongs to the FeoC family.

In terms of biological role, may function as a transcriptional regulator that controls feoABC expression. The protein is Probable [Fe-S]-dependent transcriptional repressor of Klebsiella pneumoniae subsp. pneumoniae (strain ATCC 700721 / MGH 78578).